The following is a 197-amino-acid chain: ADP-ribosylation factor 1 (197 aa).

A lipid anchor (N-myristoyl glycine) is attached at G2. Residues 24 to 31, 67 to 71, and 126 to 129 each bind GTP; these read GLDAAGKT, DVGGQ, and NKQD.

This sequence belongs to the small GTPase superfamily. Arf family.

Its subcellular location is the golgi apparatus. The catalysed reaction is GTP + H2O = GDP + phosphate + H(+). Its function is as follows. GTP-binding protein involved in protein trafficking; may modulate vesicle budding and uncoating within the Golgi apparatus. The protein is ADP-ribosylation factor 1 of Solanum tuberosum (Potato).